The sequence spans 453 residues: Bifunctional protein GlmU (453 aa).

The interval Met-1–Arg-231 is pyrophosphorylase. UDP-N-acetyl-alpha-D-glucosamine is bound by residues Leu-10 to Gly-13, Lys-24, Gln-77, Gly-82 to Thr-83, Tyr-105 to Asp-107, Gly-143, Glu-157, Asn-172, and Asn-229. Residue Asp-107 coordinates Mg(2+). Mg(2+) is bound at residue Asn-229. The segment at Ala-232–Ala-252 is linker. Positions Gly-253–Ala-453 are N-acetyltransferase. 2 residues coordinate UDP-N-acetyl-alpha-D-glucosamine: Arg-318 and Lys-336. The active-site Proton acceptor is His-348. Positions 351 and 362 each coordinate UDP-N-acetyl-alpha-D-glucosamine. Acetyl-CoA contacts are provided by residues Ala-365, Asn-371 to Tyr-372, Ser-390, Ser-408, and Arg-425.

In the N-terminal section; belongs to the N-acetylglucosamine-1-phosphate uridyltransferase family. The protein in the C-terminal section; belongs to the transferase hexapeptide repeat family. Homotrimer. Mg(2+) is required as a cofactor.

The protein resides in the cytoplasm. The enzyme catalyses alpha-D-glucosamine 1-phosphate + acetyl-CoA = N-acetyl-alpha-D-glucosamine 1-phosphate + CoA + H(+). The catalysed reaction is N-acetyl-alpha-D-glucosamine 1-phosphate + UTP + H(+) = UDP-N-acetyl-alpha-D-glucosamine + diphosphate. It functions in the pathway nucleotide-sugar biosynthesis; UDP-N-acetyl-alpha-D-glucosamine biosynthesis; N-acetyl-alpha-D-glucosamine 1-phosphate from alpha-D-glucosamine 6-phosphate (route II): step 2/2. It participates in nucleotide-sugar biosynthesis; UDP-N-acetyl-alpha-D-glucosamine biosynthesis; UDP-N-acetyl-alpha-D-glucosamine from N-acetyl-alpha-D-glucosamine 1-phosphate: step 1/1. Its pathway is bacterial outer membrane biogenesis; LPS lipid A biosynthesis. In terms of biological role, catalyzes the last two sequential reactions in the de novo biosynthetic pathway for UDP-N-acetylglucosamine (UDP-GlcNAc). The C-terminal domain catalyzes the transfer of acetyl group from acetyl coenzyme A to glucosamine-1-phosphate (GlcN-1-P) to produce N-acetylglucosamine-1-phosphate (GlcNAc-1-P), which is converted into UDP-GlcNAc by the transfer of uridine 5-monophosphate (from uridine 5-triphosphate), a reaction catalyzed by the N-terminal domain. The polypeptide is Bifunctional protein GlmU (Rhizobium etli (strain CIAT 652)).